We begin with the raw amino-acid sequence, 256 residues long: Zinc import ATP-binding protein ZnuC 1 (256 aa).

The 216-residue stretch at 5–220 (LTLQDVCVVF…PKYIALFGQQ (216 aa)) folds into the ABC transporter domain. 37–44 (GPNGAGKS) is an ATP binding site. A disordered region spans residues 232 to 256 (HHHNHDLSGEPSDGSCCSKNKKAHQ).

The protein belongs to the ABC transporter superfamily. Zinc importer (TC 3.A.1.15.5) family. As to quaternary structure, the complex is composed of two ATP-binding proteins (ZnuC), two transmembrane proteins (ZnuB) and a solute-binding protein (ZnuA).

The protein resides in the cell inner membrane. It catalyses the reaction Zn(2+)(out) + ATP(in) + H2O(in) = Zn(2+)(in) + ADP(in) + phosphate(in) + H(+)(in). Part of the ABC transporter complex ZnuABC involved in zinc import. Responsible for energy coupling to the transport system. The polypeptide is Zinc import ATP-binding protein ZnuC 1 (Aliivibrio fischeri (strain ATCC 700601 / ES114) (Vibrio fischeri)).